Consider the following 233-residue polypeptide: Orotidine 5'-phosphate decarboxylase (233 aa).

Substrate contacts are provided by residues D13, K35, 62-71 (DLKFHDIPNT), T122, R182, Q191, G211, and R212. K64 (proton donor) is an active-site residue.

Belongs to the OMP decarboxylase family. Type 1 subfamily. Homodimer.

The catalysed reaction is orotidine 5'-phosphate + H(+) = UMP + CO2. It participates in pyrimidine metabolism; UMP biosynthesis via de novo pathway; UMP from orotate: step 2/2. Catalyzes the decarboxylation of orotidine 5'-monophosphate (OMP) to uridine 5'-monophosphate (UMP). The polypeptide is Orotidine 5'-phosphate decarboxylase (Pseudomonas putida (strain ATCC 47054 / DSM 6125 / CFBP 8728 / NCIMB 11950 / KT2440)).